Here is a 474-residue protein sequence, read N- to C-terminus: MNKTVETFDPKQTTTLETPAKTLAAEAKASDGTIQGNRIGFVSLGCPKNLVDSERILTQLRIDGYEVTNSYDNADLVIVNTCGFIDAAVEESLDAVREALEENGKVIVTGCLGAKENQIREVHPDVLEITGPHSYEAVLNHVHKYVPKPEHNPFTSLIPQTGVKLTPKHYAYLKISEGCDNRCTFCIIPALRGDLDSRGVGSVLDEAKRLVESGVQEILVVSQDTSAYGKDKDGRTDFWNGMPVKQDITSLARQLGKMGAWVRLHYVYPYPWVDDLIPLMAEGLILPYLDLPLQHASPRVLKMMKRPGRVDRQLDAIKKWREICPDLVIRSTFIVGFPGETEEDFEMLLDFLREARLDRVGCFKYSEVDGAVANTLAELISEEVKEDRYERFMEVQAEISAERLARLVGRELDILIDDVDEEGAIGRSYADAPEIDGMVFINGETELTPGDMVRARIVASDEHDLWAELVALED.

The MTTase N-terminal domain occupies 37–147; the sequence is NRIGFVSLGC…VLNHVHKYVP (111 aa). [4Fe-4S] cluster contacts are provided by Cys-46, Cys-82, Cys-111, Cys-179, Cys-183, and Cys-186. A Radical SAM core domain is found at 165 to 402; that stretch reads LTPKHYAYLK…MEVQAEISAE (238 aa). In terms of domain architecture, TRAM spans 405–471; it reads ARLVGRELDI…EHDLWAELVA (67 aa).

This sequence belongs to the methylthiotransferase family. RimO subfamily. [4Fe-4S] cluster serves as cofactor.

It is found in the cytoplasm. The enzyme catalyses L-aspartate(89)-[ribosomal protein uS12]-hydrogen + (sulfur carrier)-SH + AH2 + 2 S-adenosyl-L-methionine = 3-methylsulfanyl-L-aspartate(89)-[ribosomal protein uS12]-hydrogen + (sulfur carrier)-H + 5'-deoxyadenosine + L-methionine + A + S-adenosyl-L-homocysteine + 2 H(+). Functionally, catalyzes the methylthiolation of an aspartic acid residue of ribosomal protein uS12. The chain is Ribosomal protein uS12 methylthiotransferase RimO from Shewanella amazonensis (strain ATCC BAA-1098 / SB2B).